We begin with the raw amino-acid sequence, 354 residues long: Holliday junction branch migration complex subunit RuvB (354 aa).

The tract at residues 1 to 38 is disordered; it reads MSDFERTEFELPPGVGHSQNEDLNPQQTAGDSDIDTSL. Residues 2 to 199 form a large ATPase domain (RuvB-L) region; the sequence is SDFERTEFEL…FGFTAQMEFY (198 aa). Over residues 17–30 the composition is skewed to polar residues; sequence HSQNEDLNPQQTAG. Residues leucine 38, arginine 39, glycine 80, lysine 83, threonine 84, threonine 85, 146-148, arginine 189, tyrosine 199, and arginine 236 contribute to the ATP site; that span reads EDF. Threonine 84 contacts Mg(2+). Positions 200-270 are small ATPAse domain (RuvB-S); that stretch reads DTADLTRVVT…VARAALLVFD (71 aa). The interval 273 to 354 is head domain (RuvB-H); sequence ESGLDRLDRA…LEPPEGTIGL (82 aa). Residues arginine 328 and arginine 333 each coordinate DNA.

It belongs to the RuvB family. Homohexamer. Forms an RuvA(8)-RuvB(12)-Holliday junction (HJ) complex. HJ DNA is sandwiched between 2 RuvA tetramers; dsDNA enters through RuvA and exits via RuvB. An RuvB hexamer assembles on each DNA strand where it exits the tetramer. Each RuvB hexamer is contacted by two RuvA subunits (via domain III) on 2 adjacent RuvB subunits; this complex drives branch migration. In the full resolvosome a probable DNA-RuvA(4)-RuvB(12)-RuvC(2) complex forms which resolves the HJ.

It localises to the cytoplasm. The catalysed reaction is ATP + H2O = ADP + phosphate + H(+). Functionally, the RuvA-RuvB-RuvC complex processes Holliday junction (HJ) DNA during genetic recombination and DNA repair, while the RuvA-RuvB complex plays an important role in the rescue of blocked DNA replication forks via replication fork reversal (RFR). RuvA specifically binds to HJ cruciform DNA, conferring on it an open structure. The RuvB hexamer acts as an ATP-dependent pump, pulling dsDNA into and through the RuvAB complex. RuvB forms 2 homohexamers on either side of HJ DNA bound by 1 or 2 RuvA tetramers; 4 subunits per hexamer contact DNA at a time. Coordinated motions by a converter formed by DNA-disengaged RuvB subunits stimulates ATP hydrolysis and nucleotide exchange. Immobilization of the converter enables RuvB to convert the ATP-contained energy into a lever motion, pulling 2 nucleotides of DNA out of the RuvA tetramer per ATP hydrolyzed, thus driving DNA branch migration. The RuvB motors rotate together with the DNA substrate, which together with the progressing nucleotide cycle form the mechanistic basis for DNA recombination by continuous HJ branch migration. Branch migration allows RuvC to scan DNA until it finds its consensus sequence, where it cleaves and resolves cruciform DNA. The protein is Holliday junction branch migration complex subunit RuvB of Corynebacterium jeikeium (strain K411).